The primary structure comprises 2167 residues: RNA editing associated helicase 2 (2167 aa).

A mitochondrion-targeting transit peptide spans 1–30; that stretch reads MRAIRLTVACRYLGPFRSVTLSPVVLPVRL. 2 disordered regions span residues 503-593 and 937-969; these read RARG…DEAT and ENAT…PTNV. A compositionally biased stretch (low complexity) spans 532–541; that stretch reads SSTQTPSSST. Residues 1024-1095 enclose the DRBM domain; the sequence is DAKTVLQRYC…AMHALALLRR (72 aa). The region spanning 1348 to 1513 is the Helicase ATP-binding domain; sequence LRAISSNQIV…FGNAPIINVE (166 aa). Residue 1361–1368 coordinates ATP; it reads GTTGCGKT. The Important for binding to gRNA motif lies at 1366-1367; that stretch reads GK. Residues 1460-1463 carry the DEAH box motif; sequence DEIH. The Helicase C-terminal domain occupies 1585–1762; sequence AIDHAVRSLD…SLCLQILALD (178 aa). The disordered stretch occupies residues 2132–2167; it reads IIEPCTEPKGGSSEAEKTHVNSSHTPTTSAEAGGDS. Over residues 2151–2161 the composition is skewed to polar residues; sequence VNSSHTPTTSA.

The protein belongs to the DEAD box helicase family. DEAH subfamily. Component of the REH2-associated complex (REH2C) composed of helicase REH2, associated factors H2F1 and H2F2, and mRNAs at various editing stages; the formation of the complex is RNA-independent. Within the complex, interacts with H2F1; the interaction is direct. Interacts transiently, in a RNA-dependent manner, with various editing complexes including the RNA editing core (RECC) complex, the gRNA-binding (GRBC) complex (also known as the MRB1 complex) and the RNA editing mediator (REMC) complex. Interacts with GAP1/GRBC2 via RNA forming a variant of the GRBC complex known as REH2-GRBC complex. Interacts with mitochondrial ribosomes.

The protein resides in the mitochondrion. The catalysed reaction is ATP + H2O = ADP + phosphate + H(+). ATP-dependent RNA helicase that unwinds RNA in a 3' to 5' direction and that plays an important role in mitochondrial mRNA editing, a process involving the addition and deletion of uridine (U) nucleotides in the pre-mRNA. As part of the RET2-containing gRNA-binding (RET2-GRBC) complex, acts as a scaffold for the assembly of mRNA-gRNA hybrids and the recruitment of the RNA editing core (RECC) complex. Regulates several steps of mRNA editing by the MRBC3010/GRBC6 containing gRNA-binding (MRBC3010-GRBC) complex including loading of unedited mRNA, editing in the first sequence block and subsequent editing progression across multiple sequence blocks. Also, regulates the RNA substrate content of the MRBC3010-GRBC complex as well as the association of this complex with mitoribosomes. This chain is RNA editing associated helicase 2, found in Trypanosoma brucei brucei (strain 927/4 GUTat10.1).